The sequence spans 264 residues: Proteasome assembly chaperone 2 (264 aa).

Thr-137 carries the post-translational modification Phosphothreonine.

This sequence belongs to the PSMG2 family. In terms of assembly, forms a heterodimer with PSMG1. The PSMG1-PSMG2 heterodimer interacts directly with the PSMA5 and PSMA7 proteasome alpha subunits. Post-translationally, degraded by the proteasome upon completion of 20S proteasome maturation.

Its subcellular location is the nucleus. Functionally, chaperone protein which promotes assembly of the 20S proteasome as part of a heterodimer with PSMG1. The PSMG1-PSMG2 heterodimer binds to the PSMA5 and PSMA7 proteasome subunits, promotes assembly of the proteasome alpha subunits into the heteroheptameric alpha ring and prevents alpha ring dimerization. This Bos taurus (Bovine) protein is Proteasome assembly chaperone 2.